The chain runs to 310 residues: MKTNTTSPQKIAILGAGAWGSTLALLAQAQGHRVQVWDRRKDLDLKEVLQGSQILISAVSMAGVRPVAEVVRQVGIPPQVILVSATKGLDPLQLLTPAQIWGAAFPNQPLVVLSGPNLSAEIRQGLPAAAVVASRDLWAAVQVQHALASERFRLYTSSDPLGVELGGILKNVIAIAVGVCDALHLGTNARAALVTRGLAEMIRVGSRLGARPETFNGLSGLGDLLATCHSPLSRNYQVGYGLGQGRPLSQVLAEIEGTAEGVYTAPVVVKIAAQHNIRVPITQEVHRLLQGQTTPTAALARLMERQLTSE.

W19, R39, R40, and K87 together coordinate NADPH. 2 residues coordinate sn-glycerol 3-phosphate: K87 and G115. S119 serves as a coordination point for NADPH. Sn-glycerol 3-phosphate-binding residues include K170, D223, S233, R234, and N235. K170 acts as the Proton acceptor in catalysis. Residue R234 coordinates NADPH. An NADPH-binding site is contributed by E260.

Belongs to the NAD-dependent glycerol-3-phosphate dehydrogenase family.

It localises to the cytoplasm. It catalyses the reaction sn-glycerol 3-phosphate + NAD(+) = dihydroxyacetone phosphate + NADH + H(+). It carries out the reaction sn-glycerol 3-phosphate + NADP(+) = dihydroxyacetone phosphate + NADPH + H(+). Its pathway is membrane lipid metabolism; glycerophospholipid metabolism. Functionally, catalyzes the reduction of the glycolytic intermediate dihydroxyacetone phosphate (DHAP) to sn-glycerol 3-phosphate (G3P), the key precursor for phospholipid synthesis. This chain is Glycerol-3-phosphate dehydrogenase [NAD(P)+], found in Synechococcus sp. (strain JA-3-3Ab) (Cyanobacteria bacterium Yellowstone A-Prime).